The following is a 54-amino-acid chain: Protein P32 (54 aa).

A helical transmembrane segment spans residues 4–24; sequence FGKTLITIVTAIIGVAIIAVI.

It localises to the virion membrane. Component of the phage injection machinery. Required for DNA injection in the membrane transformation event. Involved in the formation of the membrane tail tube to connect the virus interior with the host cytosol. Essential for viral infectivity. This Enterobacteria phage PRD1 (Bacteriophage PRD1) protein is Protein P32 (XXXII).